A 216-amino-acid chain; its full sequence is Pyridoxine/pyridoxamine 5'-phosphate oxidase (216 aa).

Residues 9 to 12 (RLSY) and Arg67 each bind substrate. FMN is bound by residues 62–67 (RIVLLR), 77–78 (YT), Lys84, and Gln106. The substrate site is built by Tyr124, Arg128, and Ser132. FMN contacts are provided by residues 142–143 (QS) and Trp188. 194-196 (RMH) contacts substrate. An FMN-binding site is contributed by Arg198.

The protein belongs to the pyridoxamine 5'-phosphate oxidase family. In terms of assembly, homodimer. FMN is required as a cofactor.

It catalyses the reaction pyridoxamine 5'-phosphate + O2 + H2O = pyridoxal 5'-phosphate + H2O2 + NH4(+). It carries out the reaction pyridoxine 5'-phosphate + O2 = pyridoxal 5'-phosphate + H2O2. It participates in cofactor metabolism; pyridoxal 5'-phosphate salvage; pyridoxal 5'-phosphate from pyridoxamine 5'-phosphate: step 1/1. Its pathway is cofactor metabolism; pyridoxal 5'-phosphate salvage; pyridoxal 5'-phosphate from pyridoxine 5'-phosphate: step 1/1. Catalyzes the oxidation of either pyridoxine 5'-phosphate (PNP) or pyridoxamine 5'-phosphate (PMP) into pyridoxal 5'-phosphate (PLP). The protein is Pyridoxine/pyridoxamine 5'-phosphate oxidase of Psychrobacter arcticus (strain DSM 17307 / VKM B-2377 / 273-4).